Reading from the N-terminus, the 138-residue chain is Basic phospholipase A2 Mtx-b (138 aa).

Positions Met-1–Gly-16 are cleaved as a signal peptide. Cystine bridges form between Cys-42–Cys-131, Cys-44–Cys-60, Cys-59–Cys-111, Cys-65–Cys-138, Cys-66–Cys-104, Cys-73–Cys-97, and Cys-91–Cys-102. Positions 43, 45, and 47 each coordinate Ca(2+). Residue His-63 is part of the active site. Ca(2+) is bound at residue Asp-64. Asp-105 is a catalytic residue.

In terms of assembly, heterodimer of an acidic subunit and a basic chain. The acidic subunit is non-toxic, without enzymatic activity and comprises 3 peptides that are cross-linked by 7 disulfide bridges. The basic subunit is toxic, has phospholipase A2 activity and is composed of a single chain. The cofactor is Ca(2+). In terms of tissue distribution, expressed by the venom gland.

Its subcellular location is the secreted. The catalysed reaction is a 1,2-diacyl-sn-glycero-3-phosphocholine + H2O = a 1-acyl-sn-glycero-3-phosphocholine + a fatty acid + H(+). Its function is as follows. Snake venom phospholipase A2 (PLA2) that inhibits neuromuscular transmission by blocking acetylcholine release from the nerve termini. PLA2 catalyzes the calcium-dependent hydrolysis of the 2-acyl groups in 3-sn-phosphoglycerides. The polypeptide is Basic phospholipase A2 Mtx-b (Crotalus scutulatus scutulatus (Mojave rattlesnake)).